Consider the following 356-residue polypeptide: S-adenosylmethionine:tRNA ribosyltransferase-isomerase (356 aa).

The protein belongs to the QueA family. In terms of assembly, monomer.

It localises to the cytoplasm. It catalyses the reaction 7-aminomethyl-7-carbaguanosine(34) in tRNA + S-adenosyl-L-methionine = epoxyqueuosine(34) in tRNA + adenine + L-methionine + 2 H(+). It participates in tRNA modification; tRNA-queuosine biosynthesis. Functionally, transfers and isomerizes the ribose moiety from AdoMet to the 7-aminomethyl group of 7-deazaguanine (preQ1-tRNA) to give epoxyqueuosine (oQ-tRNA). The polypeptide is S-adenosylmethionine:tRNA ribosyltransferase-isomerase (Yersinia pseudotuberculosis serotype IB (strain PB1/+)).